A 1024-amino-acid chain; its full sequence is Multidrug resistance protein MdtC (1024 aa).

The next 12 membrane-spanning stretches (helical) occupy residues 12-32, 333-353, 360-380, 387-407, 431-451, 463-483, 528-548, 853-873, 875-895, 897-917, 953-973, and 984-1004; these read VATT…FSLL, EVER…FLFL, LIPA…MYLC, LSLM…IVVL, VGFT…PLLL, FAVT…TLTP, WVMV…ISIP, LWLI…LYES, VHPL…LLAL, LFDA…IGIV, PILM…ISSG, and ITIV…TPVV.

Belongs to the resistance-nodulation-cell division (RND) (TC 2.A.6) family. MdtC subfamily. As to quaternary structure, part of a tripartite efflux system composed of MdtA, MdtB and MdtC. MdtC forms a heteromultimer with MdtB.

The protein resides in the cell inner membrane. This chain is Multidrug resistance protein MdtC, found in Yersinia enterocolitica serotype O:8 / biotype 1B (strain NCTC 13174 / 8081).